A 221-amino-acid polypeptide reads, in one-letter code: uncharacterized protein (221 aa).

To E.coli YheO.

This is an uncharacterized protein from Haemophilus influenzae (strain ATCC 51907 / DSM 11121 / KW20 / Rd).